Here is a 267-residue protein sequence, read N- to C-terminus: Glutamate racemase (267 aa).

Substrate-binding positions include 9 to 10 and 41 to 42; these read DS and YS. The active-site Proton donor/acceptor is the Cys-73. 74 to 75 serves as a coordination point for substrate; it reads NT. The active-site Proton donor/acceptor is the Cys-184. Residue 185–186 coordinates substrate; it reads TH.

This sequence belongs to the aspartate/glutamate racemases family.

It catalyses the reaction L-glutamate = D-glutamate. It functions in the pathway cell wall biogenesis; peptidoglycan biosynthesis. Functionally, provides the (R)-glutamate required for cell wall biosynthesis. The sequence is that of Glutamate racemase from Actinobacillus pleuropneumoniae serotype 7 (strain AP76).